The sequence spans 596 residues: Elongation factor 4 (596 aa).

The 183-residue stretch at 2 to 184 (KHIRNFSIIA…MIVKDVPPPV (183 aa)) folds into the tr-type G domain. GTP-binding positions include 14-19 (DHGKST) and 131-134 (NKID).

This sequence belongs to the TRAFAC class translation factor GTPase superfamily. Classic translation factor GTPase family. LepA subfamily.

The protein resides in the cell inner membrane. The catalysed reaction is GTP + H2O = GDP + phosphate + H(+). Its function is as follows. Required for accurate and efficient protein synthesis under certain stress conditions. May act as a fidelity factor of the translation reaction, by catalyzing a one-codon backward translocation of tRNAs on improperly translocated ribosomes. Back-translocation proceeds from a post-translocation (POST) complex to a pre-translocation (PRE) complex, thus giving elongation factor G a second chance to translocate the tRNAs correctly. Binds to ribosomes in a GTP-dependent manner. This chain is Elongation factor 4, found in Pseudoalteromonas translucida (strain TAC 125).